A 1284-amino-acid polypeptide reads, in one-letter code: ABC multidrug transporter atrC (1284 aa).

Over residues 1 to 11 (MKSTAESKETP) the composition is skewed to basic and acidic residues. Residues 1–24 (MKSTAESKETPSQDESTTSVPCTE) form a disordered region. Transmembrane regions (helical) follow at residues 55 to 75 (AVAI…NLIF), 99 to 119 (AAEL…LSYT), 178 to 198 (IGLL…RLWC), 203 to 223 (TLIC…VAAV), 282 to 302 (LLGL…GLAF), and 320 to 340 (IFTV…LAPY). In terms of domain architecture, ABC transmembrane type-1 1 spans 55–346 (AVAILAACAS…LAPYSIEFSR (292 aa)). The ABC transporter 1 domain maps to 381-626 (VELENVTFSY…DGVYAGLVKI (246 aa)). N-linked (GlcNAc...) asparagine glycosylation is found at N385 and N401. 416-423 (GQSGSGKS) serves as a coordination point for ATP. N488 and N632 each carry an N-linked (GlcNAc...) asparagine glycan. 2 helical membrane-spanning segments follow: residues 705-725 (LVVL…AILM) and 745-765 (FYAS…LAVG). The ABC transmembrane type-1 2 domain occupies 705 to 992 (LVVLLGCLGG…LFQWSTSITK (288 aa)). Residue N800 is glycosylated (N-linked (GlcNAc...) asparagine). 4 helical membrane-spanning segments follow: residues 824-844 (IALV…AIAF), 846-866 (WKLG…AGMV), 931-951 (MICF…GFWY), and 955-975 (LVSL…SVFF). The N-linked (GlcNAc...) asparagine glycan is linked to N995. Residues 1027 to 1280 (IAMDNVRFSY…GGLYRRMCEA (254 aa)) form the ABC transporter 2 domain. Residue 1062 to 1069 (GSSGCGKS) participates in ATP binding. N1122 is a glycosylation site (N-linked (GlcNAc...) asparagine).

The protein belongs to the ABC transporter superfamily. ABCB family. Multidrug resistance exporter (TC 3.A.1.201) subfamily.

It is found in the cell membrane. Functionally, pleiotropic ABC efflux transporter involved in the protection of the cells against a wide range of toxic compounds. This Emericella nidulans (Aspergillus nidulans) protein is ABC multidrug transporter atrC.